The primary structure comprises 315 residues: MSDSLRIIFAGTPDFAARHLGALLSSQHKIVGVFTQPDRPAGRGNKLTPSPVKILAEHHGIPVFQPKSLRPEENQHLVADLNADIMVVVAYGLILPAAVLAMPRLGCINVHGSLLPRWRGAAPIQRSVWAGDEKTGITIMQMDIGLDTGAMLHKIECAIQPEDTSATLYDKLAQLGPQGLLITLQQLAAGTALAEVQNETQATYAEKLSKEEAKLDWTLSATQLERCIRAFNPWPVSYFIVDEQPIKVWQAQVLPAGEDAEPGTIIHADKHGIQVATADGVLNITQLQPAGKKAMSAADLLNSRREWFIPGSQLV.

113–116 (SLLP) is a binding site for (6S)-5,6,7,8-tetrahydrofolate.

The protein belongs to the Fmt family.

It catalyses the reaction L-methionyl-tRNA(fMet) + (6R)-10-formyltetrahydrofolate = N-formyl-L-methionyl-tRNA(fMet) + (6S)-5,6,7,8-tetrahydrofolate + H(+). In terms of biological role, attaches a formyl group to the free amino group of methionyl-tRNA(fMet). The formyl group appears to play a dual role in the initiator identity of N-formylmethionyl-tRNA by promoting its recognition by IF2 and preventing the misappropriation of this tRNA by the elongation apparatus. The sequence is that of Methionyl-tRNA formyltransferase from Yersinia pseudotuberculosis serotype O:1b (strain IP 31758).